The chain runs to 84 residues: MANHKSSIKRIRQTNARRLRNRYYAKTARNAMKVLRATEDKNEAQALFPKVCSMLDKLAKKNVIHKNKAGNLKSKLAKHVNALA.

It belongs to the bacterial ribosomal protein bS20 family.

Its function is as follows. Binds directly to 16S ribosomal RNA. This Parabacteroides distasonis (strain ATCC 8503 / DSM 20701 / CIP 104284 / JCM 5825 / NCTC 11152) protein is Small ribosomal subunit protein bS20.